The following is a 376-amino-acid chain: DNA repair protein RAD51 homolog 3 (376 aa).

The interval 1-126 (MRGKTFRFEM…LMKTTEICGA (126 aa)) is required for Holliday junction resolution activity. Ser20 is subject to Phosphoserine. Residues 79–136 (SESHKKCTALELLEQEHTQGFIITFCSALDDILGGGVPLMKTTEICGAPGVGKTQLCM) are interaction with RAD51B, RAD51D and XRCC3. ATP is bound at residue 125–132 (GAPGVGKT). The Nuclear localization signal motif lies at 366–370 (RKRSR).

Belongs to the RecA family. RAD51 subfamily. As to quaternary structure, part of the RAD51 paralog protein complexes BCDX2 and CX3; the complexes have a ring-like structure arranged into a flat disc around a central channel. The BCDX2 complex consits of RAD51B, RAD51C, RAD51D and XRCC2; the CX3 complex consists of RAD51C and XRCC3. The BCDX2 subcomplex RAD51B:RAD51C interacts with RAD51. Interacts with SWSAP1; involved in homologous recombination repair. Interacts directly with PALB2 which may serve as a scaffold for a HR complex containing PALB2, BRCA2, RAD51C, RAD51 and XRCC3. Interacts with HELQ. Interacts with DNA damage up-regulated protein DDUP. As to expression, expressed in a variety of tissues, with highest expression in testis, heart muscle, spleen and prostate.

The protein localises to the nucleus. Its subcellular location is the cytoplasm. It localises to the perinuclear region. The protein resides in the mitochondrion. Its function is as follows. Essential for the homologous recombination (HR) pathway of DNA repair. Involved in the homologous recombination repair (HRR) pathway of double-stranded DNA breaks arising during DNA replication or induced by DNA-damaging agents. Part of the RAD51 paralog protein complexes BCDX2 and CX3 which act at different stages of the BRCA1-BRCA2-dependent HR pathway. Upon DNA damage, BCDX2 seems to act downstream of BRCA2 recruitment and upstream of RAD51 recruitment; CX3 seems to act downstream of RAD51 recruitment; both complexes bind predominantly to the intersection of the four duplex arms of the Holliday junction (HJ) and to junction of replication forks. The BCDX2 complex was originally reported to bind single-stranded DNA, single-stranded gaps in duplex DNA and specifically to nicks in duplex DNA. The BCDX2 subcomplex RAD51B:RAD51C exhibits single-stranded DNA-dependent ATPase activity suggesting an involvement in early stages of the HR pathway. Involved in RAD51 foci formation in response to DNA damage suggesting an involvement in early stages of HR probably in the invasion step. Has an early function in DNA repair in facilitating phosphorylation of the checkpoint kinase CHEK2 and thereby transduction of the damage signal, leading to cell cycle arrest and HR activation. Participates in branch migration and HJ resolution and thus is important for processing HR intermediates late in the DNA repair process; the function may be linked to the CX3 complex. Part of a PALB2-scaffolded HR complex containing BRCA2 and which is thought to play a role in DNA repair by HR. Protects RAD51 from ubiquitin-mediated degradation that is enhanced following DNA damage. Plays a role in regulating mitochondrial DNA copy number under conditions of oxidative stress in the presence of RAD51 and XRCC3. Contributes to DNA cross-link resistance, sister chromatid cohesion and genomic stability. Involved in maintaining centrosome number in mitosis. This Homo sapiens (Human) protein is DNA repair protein RAD51 homolog 3 (RAD51C).